Here is a 205-residue protein sequence, read N- to C-terminus: Phosphoenolpyruvate guanylyltransferase (205 aa).

Phosphoenolpyruvate-binding residues include Thr-138, Gly-154, and Ser-157.

This sequence belongs to the CofC family.

It carries out the reaction phosphoenolpyruvate + GTP + H(+) = enolpyruvoyl-2-diphospho-5'-guanosine + diphosphate. It participates in cofactor biosynthesis; coenzyme F420 biosynthesis. Its function is as follows. Guanylyltransferase that catalyzes the activation of phosphoenolpyruvate (PEP) as enolpyruvoyl-2-diphospho-5'-guanosine, via the condensation of PEP with GTP. It is involved in the biosynthesis of coenzyme F420, a hydride carrier cofactor. The polypeptide is Phosphoenolpyruvate guanylyltransferase (Chloroflexus aurantiacus (strain ATCC 29364 / DSM 637 / Y-400-fl)).